Consider the following 184-residue polypeptide: UPF0301 protein RSKD131_2391 (184 aa).

It belongs to the UPF0301 (AlgH) family.

The sequence is that of UPF0301 protein RSKD131_2391 from Cereibacter sphaeroides (strain KD131 / KCTC 12085) (Rhodobacter sphaeroides).